We begin with the raw amino-acid sequence, 619 residues long: Dihydroxy-acid dehydratase (619 aa).

D81 contributes to the Mg(2+) binding site. C122 lines the [2Fe-2S] cluster pocket. The Mg(2+) site is built by D123 and K124. K124 carries the post-translational modification N6-carboxylysine. C195 contributes to the [2Fe-2S] cluster binding site. Mg(2+) is bound at residue E494. Catalysis depends on S520, which acts as the Proton acceptor.

The protein belongs to the IlvD/Edd family. As to quaternary structure, homodimer. It depends on [2Fe-2S] cluster as a cofactor. Mg(2+) serves as cofactor.

It catalyses the reaction (2R)-2,3-dihydroxy-3-methylbutanoate = 3-methyl-2-oxobutanoate + H2O. It carries out the reaction (2R,3R)-2,3-dihydroxy-3-methylpentanoate = (S)-3-methyl-2-oxopentanoate + H2O. It functions in the pathway amino-acid biosynthesis; L-isoleucine biosynthesis; L-isoleucine from 2-oxobutanoate: step 3/4. It participates in amino-acid biosynthesis; L-valine biosynthesis; L-valine from pyruvate: step 3/4. Functions in the biosynthesis of branched-chain amino acids. Catalyzes the dehydration of (2R,3R)-2,3-dihydroxy-3-methylpentanoate (2,3-dihydroxy-3-methylvalerate) into 2-oxo-3-methylpentanoate (2-oxo-3-methylvalerate) and of (2R)-2,3-dihydroxy-3-methylbutanoate (2,3-dihydroxyisovalerate) into 2-oxo-3-methylbutanoate (2-oxoisovalerate), the penultimate precursor to L-isoleucine and L-valine, respectively. This Shewanella denitrificans (strain OS217 / ATCC BAA-1090 / DSM 15013) protein is Dihydroxy-acid dehydratase.